The primary structure comprises 610 residues: Diol dehydratase-reactivating factor large subunit (610 aa).

11–13 (NSS) is an ATP binding site. Threonine 105, aspartate 166, and aspartate 183 together coordinate Mg(2+). ATP is bound by residues 459 to 462 (EEIK), 557 to 558 (GS), and arginine 591.

Belongs to the DdrA/PduG family. Component of the DDR complex, a heterotetramer of DdrA(2)/DdrB(2). The DDR complex interacts with the diol dehydratase complex in the presence of ADP but not ATP. The cofactor is Mg(2+).

The enzyme catalyses ATP + H2O = ADP + phosphate + H(+). Its function is as follows. Large subunit of the diol dehydratase-reactivating factor (DDR), which reactivates suicidally inhibited adenosylcobalamin-dependent diol dehydratase (DD, pddA, pddB, pddC). DDR acts as a chaperone, reactivating inactivated DD holoenzyme in the presence of ATP, Mg(2+) and free adenosylcobalamin (AdoCbl), by mediating the exchange of the tightly bound damaged cofactor AdoCbl for a free intact one. Reactivation takes place in two steps: ADP-dependent cobalamin release, then ATP-dependent dissociation of the DD apoenzyme-DDR complex. DDR has weak ATPase activity which is required for DD reactivation. This subunit contains the adenosine nucleotide binding site. Activates glycerol-inactivated, O2-inactivated holoenzyme and inactivated enzyme-cyanocobalamin complex. Also reactivates glycerol-inactivated hologlycerol dehydratase, a DD isozyme. The chain is Diol dehydratase-reactivating factor large subunit from Klebsiella michiganensis (strain ATCC 8724 / DSM 4798 / JCM 20051 / NBRC 3318 / NRRL B-199 / KCTC 1686 / BUCSAV 143 / CCM 1901).